The sequence spans 191 residues: Scytalone dehydratase PfmaJ (191 aa).

Tyr25, Tyr45, and Phe48 together coordinate substrate. Residues His80 and His105 contribute to the active site. A substrate-binding site is contributed by Asn126.

Belongs to the scytalone dehydratase family. As to quaternary structure, homotrimer. Each subunit contains an active site, located in the central part of the hydrophobic core of the monomer, which functions independently.

The protein resides in the endosome. It catalyses the reaction scytalone = 1,3,8-trihydroxynaphthalene + H2O. It participates in pigment biosynthesis; melanin biosynthesis. Its function is as follows. Scytalone dehydratase involved the biosynthesis of dihydroxynaphthalene (DHN)-melanin, a bluish-green pigment forming a dark layer in the conidial wall that protects the conidia from UV radiations. The first step of the pathway is the production of the pentaketide 1,3,6,8-tetrahydroxynaphthalene (1,3,6,8-THN or T4HN) by the polyketide synthase PfmaE though condensation of acetyl-CoA with malonyl-CoA. T4HN is not stable and easily oxidizes into the stable form flaviolin. T4HN is also substrate of the hydroxynaphthalene reductase PfmaG to yield scytalone. The scytalone dehydratase PfmaJ then reduces scytalone to 1,3,8-THN. 1,3,8-THN is then substrate of the hydroxynaphthalene reductase PfmaI to yield vermelone. Vermelone is further converted by the multicopper oxidase PfmaD to 1,8-DHN. Finally the laccase PFICI_06862 transforms 1,8-DHN to DHN-melanin. The roles of the 5-oxoprolinase PfmaA and the proline iminopeptidase PfmaB within the cluster have not been elucidated yet. This is Scytalone dehydratase PfmaJ from Pestalotiopsis fici (strain W106-1 / CGMCC3.15140).